The primary structure comprises 243 residues: UPF0246 protein SUB1767 (243 aa).

It belongs to the UPF0246 family.

This is UPF0246 protein SUB1767 from Streptococcus uberis (strain ATCC BAA-854 / 0140J).